The following is a 1416-amino-acid chain: DNA-directed RNA polymerase subunit beta' (1416 aa).

Zn(2+) contacts are provided by cysteine 68, cysteine 70, cysteine 83, and cysteine 86. Residues aspartate 458, aspartate 460, and aspartate 462 each coordinate Mg(2+). Zn(2+) is bound by residues cysteine 811, cysteine 884, cysteine 891, and cysteine 894.

Belongs to the RNA polymerase beta' chain family. As to quaternary structure, the RNAP catalytic core consists of 2 alpha, 1 beta, 1 beta' and 1 omega subunit. When a sigma factor is associated with the core the holoenzyme is formed, which can initiate transcription. The cofactor is Mg(2+). Zn(2+) is required as a cofactor.

The catalysed reaction is RNA(n) + a ribonucleoside 5'-triphosphate = RNA(n+1) + diphosphate. Its function is as follows. DNA-dependent RNA polymerase catalyzes the transcription of DNA into RNA using the four ribonucleoside triphosphates as substrates. This chain is DNA-directed RNA polymerase subunit beta', found in Francisella philomiragia subsp. philomiragia (strain ATCC 25017 / CCUG 19701 / FSC 153 / O#319-036).